A 119-amino-acid chain; its full sequence is Beta-2-microglobulin (119 aa).

The signal sequence occupies residues 1–20 (MARFVVVPLLVLLSLFGLEA). The Ig-like C1-type domain maps to 25–114 (PKIQVYSRYP…VTFSTPKTVK (90 aa)). A disulfide bridge connects residues cysteine 45 and cysteine 100.

This sequence belongs to the beta-2-microglobulin family. Heterodimer of an alpha chain and a beta chain. Beta-2-microglobulin is the beta-chain of major histocompatibility complex class I molecules.

It localises to the secreted. In terms of biological role, component of the class I major histocompatibility complex (MHC). Involved in the presentation of peptide antigens to the immune system. This chain is Beta-2-microglobulin (B2M), found in Saguinus bicolor bicolor (Pied bare-faced tamarin).